The primary structure comprises 294 residues: Cell division protein FtsQ (294 aa).

Topologically, residues 1 to 26 (MARGPNRRRVDRVPGERRRRLARAMA) are cytoplasmic. A helical membrane pass occupies residues 27–49 (LALPSILALAALGGAATLGWRVG). At 50 to 294 (WKSDLLRVRE…GPQGRSSSLR (245 aa)) the chain is on the periplasmic side. The POTRA domain occupies 55 to 123 (LRVREIRFEG…PALEVQLAER (69 aa)). Residues 266–294 (AGRRGEPDGRSSYAAGGGGGPQGRSSSLR) are disordered.

Belongs to the FtsQ/DivIB family. FtsQ subfamily.

It localises to the cell inner membrane. In terms of biological role, essential cell division protein. The sequence is that of Cell division protein FtsQ from Anaeromyxobacter sp. (strain K).